The sequence spans 398 residues: G2/mitotic-specific cyclin-B2 (398 aa).

Thr-8 is modified (phosphothreonine). Ser-11, Ser-77, and Ser-92 each carry phosphoserine. Position 94 is a phosphothreonine (Thr-94). Ser-99, Ser-392, and Ser-398 each carry phosphoserine.

Belongs to the cyclin family. Cyclin AB subfamily. In terms of assembly, interacts with the CDK1 protein kinase to form a serine/threonine kinase holoenzyme complex also known as maturation promoting factor (MPF). The cyclin subunit imparts substrate specificity to the complex.

Functionally, essential for the control of the cell cycle at the G2/M (mitosis) transition. The sequence is that of G2/mitotic-specific cyclin-B2 (CCNB2) from Macaca fascicularis (Crab-eating macaque).